A 372-amino-acid polypeptide reads, in one-letter code: GTPase Obg (372 aa).

Positions 1-159 constitute an Obg domain; that stretch reads MAFVDEAKFF…KWLLIELKLM (159 aa). A disordered region spans residues 121–141; sequence GSGGMGNPHFSSGSNRTPRVA. The OBG-type G domain maps to 160 to 329; sequence ADVGLVGLPN…LVKLIGDIID (170 aa). GTP contacts are provided by residues 166-173, 191-195, 213-216, 280-283, and 310-312; these read GLPNAGKS, FTTLE, DIPG, NKCD, and SAI. Mg(2+) contacts are provided by Ser173 and Thr193. Positions 346–372 are disordered; sequence QDLKKQKEEERRQELKKQKEEEQAKDE.

This sequence belongs to the TRAFAC class OBG-HflX-like GTPase superfamily. OBG GTPase family. Monomer. Requires Mg(2+) as cofactor.

It localises to the cytoplasm. In terms of biological role, an essential GTPase which binds GTP, GDP and possibly (p)ppGpp with moderate affinity, with high nucleotide exchange rates and a fairly low GTP hydrolysis rate. Plays a role in control of the cell cycle, stress response, ribosome biogenesis and in those bacteria that undergo differentiation, in morphogenesis control. This is GTPase Obg from Desulfotalea psychrophila (strain LSv54 / DSM 12343).